Consider the following 491-residue polypeptide: Probable cytosol aminopeptidase (491 aa).

Mn(2+)-binding residues include Lys-263 and Asp-268. The active site involves Lys-275. Asp-286, Asp-345, and Glu-347 together coordinate Mn(2+). Residue Arg-349 is part of the active site.

This sequence belongs to the peptidase M17 family. Mn(2+) is required as a cofactor.

The protein resides in the cytoplasm. It catalyses the reaction Release of an N-terminal amino acid, Xaa-|-Yaa-, in which Xaa is preferably Leu, but may be other amino acids including Pro although not Arg or Lys, and Yaa may be Pro. Amino acid amides and methyl esters are also readily hydrolyzed, but rates on arylamides are exceedingly low.. It carries out the reaction Release of an N-terminal amino acid, preferentially leucine, but not glutamic or aspartic acids.. Its function is as follows. Presumably involved in the processing and regular turnover of intracellular proteins. Catalyzes the removal of unsubstituted N-terminal amino acids from various peptides. The polypeptide is Probable cytosol aminopeptidase (Haemophilus influenzae (strain PittEE)).